The chain runs to 415 residues: MAAACPGTAVPVWLSEEDLSCIICQGLLDWPTTLPCGHSFCLQCLKDLWVSKRAGVDSCPWACPICRKGPSAKPVLHKNPLLQDLVDKYRQAALELEAGPEPAPVPRSLCTPTPPQVTVQKSTTQVVQELTELVGQLVDIVKSLQTQRPSLASGLDNALGILHMDSSSEEEYPLDSPKLVTFSASQKKIQEILRDLEKIQETLQGSVTGNEAPKKQVEEMASSVGLLPDQRYPVSRKASQFSLWAISPTFDLRSLSCNLEVSNNCRMVTVSRALQPYHWSSERFSISQVLCSQAFSSGQKYWEVDTRNCSHWAVGVASWGMKRDKMLGRTMDSWCIEWRGPSQFSAWAMMKKTDLSSGPPEVVGVWLDLELGKLAFYSVADQERPLYECEVSSSSPLHPAFWLYGLTPGNYLEIL.

Residues C21–R67 form an RING-type zinc finger. Residues T181 to S206 are a coiled coil. Residues P228–L415 enclose the B30.2/SPRY domain.

Homodimer. Interacts (homodimer) with RIGI (double-stranded RNA-bound oligomeric form); involved in both RIGI ubiquitination, oligomerization into filaments associated with viral RNAs and the bridging of these filaments. Interacts with UBE2D3 and UBE2N; E2 ubiquitin ligases involved in RNF135-mediated ubiquitination of RIGI and activation of the RIG-I signaling pathway. Interacts with PCBP2.

The protein localises to the cytoplasm. The protein resides in the stress granule. It carries out the reaction S-ubiquitinyl-[E2 ubiquitin-conjugating enzyme]-L-cysteine + [acceptor protein]-L-lysine = [E2 ubiquitin-conjugating enzyme]-L-cysteine + N(6)-ubiquitinyl-[acceptor protein]-L-lysine.. The protein operates within protein modification; protein ubiquitination. Its function is as follows. E2-dependent E3 ubiquitin-protein ligase that functions as a RIGI coreceptor in the sensing of viral RNAs in cell cytoplasm and the activation of the antiviral innate immune response. Together with the UBE2D3, UBE2N and UB2V1 E2 ligases, catalyzes the 'Lys-63'-linked polyubiquitination of RIGI oligomerized on viral RNAs, an essential step in the activation of the RIG-I signaling pathway. Through a ubiquitin-independent parallel mechanism, which consists in bridging RIGI filaments forming on longer viral RNAs, further activates the RIG-I signaling pathway. This second mechanism that synergizes with the ubiquitin-dependent one would thereby allow an RNA length-dependent regulation of the RIG-I signaling pathway. Associated with the E2 ligase UBE2N, also constitutively synthesizes unanchored 'Lys-63'-linked polyubiquitin chains that may also activate the RIG-I signaling pathway. This Rattus norvegicus (Rat) protein is E3 ubiquitin-protein ligase RNF135.